A 601-amino-acid polypeptide reads, in one-letter code: Glutathione-regulated potassium-efflux system protein KefB (601 aa).

Transmembrane regions (helical) follow at residues 4 to 24 (ADLLTAGVLFLFAAVAAVPLA), 29 to 49 (IGAVLGYLLAGIAIGPWGLGF), 55 to 75 (EILHFSELGVVFLMFIIGLEL), 87 to 107 (IFGVGAAQVLLSAAVLAGLLM), 111 to 131 (FLWQAAVVGGIGLAMSSTAMA), 152 to 172 (VLLFQDLAVIPALALVPLLAG), 177 to 197 (HFDWFKVAMKVLAFAVMLIGG), 207 to 227 (FIAASGVREVFTAATLLLVLS), 230 to 250 (LFMDALGLSMALGTFIAGVLL), 262 to 282 (AIDPFKGLLLGLFFISVGMSL), 284 to 304 (LGVLYTHLLWVAASVVILVAI), 324 to 344 (MQFASVLSQGGEFAFVLFSTA), and 356 to 376 (ALLLVTVTLSMMTTPLLMKGI). The RCK N-terminal domain maps to 400-519 (KPQVIVVGFG…AGVTQFSRET (120 aa)).

It belongs to the monovalent cation:proton antiporter 2 (CPA2) transporter (TC 2.A.37) family. KefB subfamily. As to quaternary structure, interacts with the regulatory subunit KefG.

Its subcellular location is the cell inner membrane. In terms of biological role, pore-forming subunit of a potassium efflux system that confers protection against electrophiles. Catalyzes K(+)/H(+) antiport. The polypeptide is Glutathione-regulated potassium-efflux system protein KefB (Salmonella schwarzengrund (strain CVM19633)).